We begin with the raw amino-acid sequence, 92 residues long: UPF0237 protein MA_3235 (92 aa).

The region spanning 7–81 is the ACT domain; that stretch reads IITVIGSDRV…KSLGVEVKVQ (75 aa).

This sequence belongs to the UPF0237 family.

This is UPF0237 protein MA_3235 from Methanosarcina acetivorans (strain ATCC 35395 / DSM 2834 / JCM 12185 / C2A).